Here is a 440-residue protein sequence, read N- to C-terminus: MGHIKKGELTQEEKELLEVIGKGTVQEAGRLLSSKNVHVNCLDENGMTPLMHAAYKGKLEMCKLLLRHGADASCHQHEHGYTALMFAALSGNKDITWVMLEAGAETDVVNSVGRTAAQMAAFVGQHDCVAIINNFFPRERLDYYTKPQGLDKEPKLPPKLAGPLHKIITTTNLHPVKIVMLVSENPLLADAAALGKCYRVMDLICEKCMKQRDMNEVLAMKMHYISCIFQKCITFLKEGENKLDTLIRSLLKGRASDGFPVYQEKIIRESIRKFPYCEATLLQQLVRSIAPVEIGSDPTAFSVLTQAITGQVGFVDVEFCTTCGEKGASKRCSVCKMVIYCDQTCQKTHWFAHKKMCKSLKDVYEKQQIEAAKHKRQEEKNGNPNVSSNHVNEDQPEAEEGITQENSIPSDSVEGEKEAANDTGLASAQDAPTGPQLSEE.

ANK repeat units follow at residues 45-74 (NGMT…DASC), 79-108 (HGYT…ETDV), and 159-188 (KLAG…NPLL). The Zn(2+) site is built by Cys320, Cys323, Cys332, Cys335, Cys341, Cys345, His353, and Cys357. The segment at 320 to 357 (CTTCGEKGASKRCSVCKMVIYCDQTCQKTHWFAHKKMC) adopts an MYND-type zinc-finger fold. The segment covering 371-381 (AAKHKRQEEKN) has biased composition (basic and acidic residues). Residues 371–440 (AAKHKRQEEK…APTGPQLSEE (70 aa)) are disordered.

In terms of assembly, interacts with the retinal-specific guanylyl cyclase GC1.

It is found in the cell projection. It localises to the cilium. In terms of biological role, may be involved in the trafficking of signaling proteins to the cilia. This is Ankyrin repeat and MYND domain-containing protein 2 (Ankmy2) from Mus musculus (Mouse).